Consider the following 222-residue polypeptide: MGLFGKTQEKPPKELVNEWSLKIRKEMRVVDRQIRDIQREEEKVKRSVKDAAKKGQKDVCVVLAKEMIRSRKAVSKLYASKAHMNSVLMGMKNQLAVLRVAGSLQKSTEVMKAMQSLVKIPEIQATMRELSKEMMKAGIIEEMLEDTFESMDDQEEMEEEAEMEIDRILFEITAGALGKAPSKVTDALPEPEPSGAMAASEDEEEEEEALEAMQSRLATLRS.

A lipid anchor (N-myristoyl glycine) is attached at glycine 2. An intramolecular interaction with C-terminus region spans residues 2 to 113; it reads GLFGKTQEKP…LQKSTEVMKA (112 aa). The stretch at 22-54 forms a coiled coil; it reads KIRKEMRVVDRQIRDIQREEEKVKRSVKDAAKK. 2 important for autoinhibitory function regions span residues 59–64 and 168–169; these read VCVVLA and IL. Positions 141–222 form a coiled coil; sequence EEMLEDTFES…MQSRLATLRS (82 aa). The segment at 151 to 220 is intramolecular interaction with N-terminus; that stretch reads MDDQEEMEEE…EAMQSRLATL (70 aa). The interaction with VPS4A stretch occupies residues 151–222; it reads MDDQEEMEEE…MQSRLATLRS (72 aa). A Glycyl lysine isopeptide (Lys-Gly) (interchain with G-Cter in ubiquitin) cross-link involves residue lysine 179. Residues 180–222 form a disordered region; that stretch reads APSKVTDALPEPEPSGAMAASEDEEEEEEALEAMQSRLATLRS. 3 interaction with STAMBP regions span residues 196 to 222, 203 to 207, and 221 to 222; these read AMAA…TLRS, EEEEE, and RS. Serine 200 carries the post-translational modification Phosphoserine. Residues 200–210 are compositionally biased toward acidic residues; it reads SEDEEEEEEAL. The MIT-interacting motif signature appears at 201 to 211; it reads EDEEEEEEALE.

This sequence belongs to the SNF7 family. In terms of assembly, probable core component of the endosomal sorting required for transport complex III (ESCRT-III). ESCRT-III components are thought to multimerize to form a flat lattice on the perimeter membrane of the endosome. Several assembly forms of ESCRT-III may exist that interact and act sequentially. Forms a metastable monomer in solution; its core structure (without part of the putative autoinhibitory C-terminal acidic region) oligomerizes into a flat lattice via two different dimerization interfaces. In vitro, heteromerizes with CHMP2A (but not CHMP4) to form helical tubular structures that expose membrane-interacting sites on the outside whereas VPS4B can associate on the inside of the tubule. May interact with IGFBP7; the relevance of such interaction however remains unclear. Interacts with CHMP2A. Interacts with CHMP4A; the interaction requires the release of CHMP4A autoinhibition. Interacts with VPS4A. Interacts with STAMBP; the interaction appears to relieve the autoinhibition of CHMP3. Interacts with VTA1.

It localises to the cytoplasm. It is found in the cytosol. Its subcellular location is the membrane. The protein resides in the endosome. The protein localises to the late endosome membrane. Functionally, probable core component of the endosomal sorting required for transport complex III (ESCRT-III) which is involved in multivesicular bodies (MVBs) formation and sorting of endosomal cargo proteins into MVBs. MVBs contain intraluminal vesicles (ILVs) that are generated by invagination and scission from the limiting membrane of the endosome and mostly are delivered to lysosomes enabling degradation of membrane proteins, such as stimulated growth factor receptors, lysosomal enzymes and lipids. The MVB pathway appears to require the sequential function of ESCRT-O, -I,-II and -III complexes. ESCRT-III proteins mostly dissociate from the invaginating membrane before the ILV is released. The ESCRT machinery also functions in topologically equivalent membrane fission events, such as the terminal stages of cytokinesis and the budding of enveloped viruses (lentiviruses). ESCRT-III proteins are believed to mediate the necessary vesicle extrusion and/or membrane fission activities, possibly in conjunction with the AAA ATPase VPS4. Selectively binds to phosphatidylinositol 3,5-bisphosphate PtdIns(3,5)P2 and PtdIns(3,4)P2 in preference to other phosphoinositides tested. Involved in late stages of cytokinesis. Plays a role in endosomal sorting/trafficking of EGF receptor. This Pongo abelii (Sumatran orangutan) protein is Charged multivesicular body protein 3 (CHMP3).